A 344-amino-acid chain; its full sequence is L-sulfolactate dehydrogenase (344 aa).

Belongs to the LDH2/MDH2 oxidoreductase family.

The protein resides in the cytoplasm. It catalyses the reaction a (2S)-2-hydroxycarboxylate + NAD(+) = a 2-oxocarboxylate + NADH + H(+). The protein operates within cofactor biosynthesis; coenzyme M biosynthesis; sulfoacetaldehyde from phosphoenolpyruvate and sulfite: step 3/4. Its pathway is cofactor biosynthesis; 5,6,7,8-tetrahydromethanopterin biosynthesis. Catalyzes the reduction of sulfopyruvate to (R)-sulfolactate much more efficiently than the reverse reaction. Also catalyzes the reduction of oxaloacetate, alpha-ketoglutarate, and to a much lower extent, KHTCA, but not pyruvate. Involved in the biosynthesis of both coenzyme M (with (R)-sulfolactate) and methanopterin (with alpha-ketoglutarate). In Methanocaldococcus jannaschii (strain ATCC 43067 / DSM 2661 / JAL-1 / JCM 10045 / NBRC 100440) (Methanococcus jannaschii), this protein is L-sulfolactate dehydrogenase (comC).